We begin with the raw amino-acid sequence, 348 residues long: Protein-arginine N-acetylglucosaminyltransferase SseK2 (348 aa).

Residues 64–66 (QWF), tyrosine 88, and 237–240 (YLDA) each bind UDP-N-acetyl-alpha-D-glucosamine. The short motif at 239 to 241 (DAD) is the DXD motif element. Aspartate 241 contacts Mn(2+). Residue glutamate 271 is the Proton acceptor of the active site. UDP-N-acetyl-alpha-D-glucosamine-binding positions include asparagine 338, serine 340, and 345-348 (SSWR). Mn(2+)-binding residues include asparagine 338 and serine 340.

Belongs to the glycosyltransferase NleB family. It depends on Mn(2+) as a cofactor.

It localises to the secreted. Its subcellular location is the host Golgi apparatus. It catalyses the reaction L-arginyl-[protein] + UDP-N-acetyl-alpha-D-glucosamine = N(omega)-(N-acetyl-beta-D-glucosaminyl)-L-arginyl-[protein] + UDP + H(+). Its activity is regulated as follows. Protein-arginine N-acetylglucosaminyltransferase activity is inhibited by 100066N compound (flavone analog) and 102644N compound (a substituted isoxazole). Its function is as follows. Protein-arginine N-acetylglucosaminyltransferase effector that catalyzes the transfer of a single N-acetylglucosamine (GlcNAc) to a conserved arginine residue in the death domain of host proteins such as FADD: arginine GlcNAcylation prevents homotypic/heterotypic death domain interactions. Also acts on host proteins without a death domain: catalyzes arginine GlcNAcylation of host small Rab1 GTPase, thereby preventing GTPase activity and leading to impaired host vesicular protein transport. In contrast to Ssek1, not able to disrupt TNF signaling in infected cells. The protein is Protein-arginine N-acetylglucosaminyltransferase SseK2 of Salmonella typhimurium (strain SL1344).